We begin with the raw amino-acid sequence, 85 residues long: UPF0291 protein SGO_0570 (85 aa).

The tract at residues 56–85 (EDGNDVTPEKLRQVQREKGLHGRSLDDPNS) is disordered. Residues 62–85 (TPEKLRQVQREKGLHGRSLDDPNS) are compositionally biased toward basic and acidic residues.

Belongs to the UPF0291 family.

It is found in the cytoplasm. This is UPF0291 protein SGO_0570 from Streptococcus gordonii (strain Challis / ATCC 35105 / BCRC 15272 / CH1 / DL1 / V288).